The sequence spans 235 residues: MQEPHRQPAICLSTRLAKARLYLCTDARRERGDLAQFVNAALAGGVDIVQLRDKGSVGEQQFGPLEARDALAACEIFTDATGRHDALFAVNDRADIARAAGADVLHLGQGDLPPGVARQIVCRQMLIGLSTHDRHQVAAAVAALDAGLVDYFCVGPCWPTPTKPDRPAPGLELVRAAAELAGDKPWFAIGGIDAQRLPDVLHAGARRIVVVRAITAAADPRAAAEQLISTLTATS.

4-amino-2-methyl-5-(diphosphooxymethyl)pyrimidine is bound by residues 50-54 (QLRDK) and asparagine 91. Residues aspartate 92 and aspartate 111 each coordinate Mg(2+). Serine 130 contributes to the 4-amino-2-methyl-5-(diphosphooxymethyl)pyrimidine binding site. 2-[(2R,5Z)-2-carboxy-4-methylthiazol-5(2H)-ylidene]ethyl phosphate is bound at residue 160 to 162 (TPT). 4-amino-2-methyl-5-(diphosphooxymethyl)pyrimidine is bound at residue lysine 163. A 2-[(2R,5Z)-2-carboxy-4-methylthiazol-5(2H)-ylidene]ethyl phosphate-binding site is contributed by glycine 191.

This sequence belongs to the thiamine-phosphate synthase family. Mg(2+) is required as a cofactor.

It carries out the reaction 2-[(2R,5Z)-2-carboxy-4-methylthiazol-5(2H)-ylidene]ethyl phosphate + 4-amino-2-methyl-5-(diphosphooxymethyl)pyrimidine + 2 H(+) = thiamine phosphate + CO2 + diphosphate. The enzyme catalyses 2-(2-carboxy-4-methylthiazol-5-yl)ethyl phosphate + 4-amino-2-methyl-5-(diphosphooxymethyl)pyrimidine + 2 H(+) = thiamine phosphate + CO2 + diphosphate. It catalyses the reaction 4-methyl-5-(2-phosphooxyethyl)-thiazole + 4-amino-2-methyl-5-(diphosphooxymethyl)pyrimidine + H(+) = thiamine phosphate + diphosphate. Its pathway is cofactor biosynthesis; thiamine diphosphate biosynthesis; thiamine phosphate from 4-amino-2-methyl-5-diphosphomethylpyrimidine and 4-methyl-5-(2-phosphoethyl)-thiazole: step 1/1. In terms of biological role, condenses 4-methyl-5-(beta-hydroxyethyl)thiazole monophosphate (THZ-P) and 2-methyl-4-amino-5-hydroxymethyl pyrimidine pyrophosphate (HMP-PP) to form thiamine monophosphate (TMP). The sequence is that of Thiamine-phosphate synthase from Mycobacterium leprae (strain TN).